The primary structure comprises 523 residues: Na(+)/H(+) antiporter NhaB (523 aa).

10 consecutive transmembrane segments (helical) span residues 28-48 (FLII…WLLV), 51-71 (FIFT…GLLA), 89-109 (LSAN…IYFV), 137-157 (MAAF…VISI), 237-257 (FFIR…ATCV), 302-322 (AIIC…VGLI), 347-367 (TESL…AVII), 390-410 (LFYI…VGTV), 445-465 (VATP…LAPL), and 476-496 (MALP…MYLL).

Belongs to the NhaB Na(+)/H(+) (TC 2.A.34) antiporter family.

Its subcellular location is the cell inner membrane. The catalysed reaction is 2 Na(+)(in) + 3 H(+)(out) = 2 Na(+)(out) + 3 H(+)(in). Functionally, na(+)/H(+) antiporter that extrudes sodium in exchange for external protons. The protein is Na(+)/H(+) antiporter NhaB of Tolumonas auensis (strain DSM 9187 / NBRC 110442 / TA 4).